Here is a 286-residue protein sequence, read N- to C-terminus: MDLRNPNRDPNSRRVLYRTNKEENRKELKHVKIDESTLAQEGKKLDLPKKRFYRQRAHSNPFSDHQLDYPTSPDDMNWSKLFPHYYDSTTGKMTKDVTIADIGCGFGGLLIDLSPAFPEDLILGMEIRVQVTNYVEDRIIALRTNHAKDYQYQNINVIRGNAMKFLPNFFQRAQLSKMFFCFPDPHFKQRKHKARIITNTLLSEYAYVLKDNGVIYTITDVEDLHNWMVKHLEEHPLFERYDKEWEDNDKCVQIMRNATEEGKKVERKKGDKFVACFRRLPNPAIV.

S-adenosyl-L-methionine is bound by residues Gly-103, 126–127, 161–162, and Cys-181; these read EI and NA. The active site involves Asp-184. Residue 259-261 participates in S-adenosyl-L-methionine binding; the sequence is TEE.

This sequence belongs to the class I-like SAM-binding methyltransferase superfamily. TrmB family. Forms a complex with TRM82.

It is found in the nucleus. It carries out the reaction guanosine(46) in tRNA + S-adenosyl-L-methionine = N(7)-methylguanosine(46) in tRNA + S-adenosyl-L-homocysteine. The protein operates within tRNA modification; N(7)-methylguanine-tRNA biosynthesis. In terms of biological role, catalyzes the formation of N(7)-methylguanine at position 46 (m7G46) in tRNA. This chain is tRNA (guanine-N(7)-)-methyltransferase, found in Vanderwaltozyma polyspora (strain ATCC 22028 / DSM 70294 / BCRC 21397 / CBS 2163 / NBRC 10782 / NRRL Y-8283 / UCD 57-17) (Kluyveromyces polysporus).